Consider the following 487-residue polypeptide: Fatty acid desaturase 2-like protein FADS2B (487 aa).

Positions 1-11 (MKLEEKLEHNE) are enriched in basic and acidic residues. Residues 1–20 (MKLEEKLEHNESLVGKSRPC) are disordered. At 1–175 (MKLEEKLEHN…AMNMFSANLR (175 aa)) the chain is on the cytoplasmic side. The region spanning 62–139 (LNLYTWQEIQ…LKPLLIGELS (78 aa)) is the Cytochrome b5 heme-binding domain. Positions 97 and 120 each coordinate heme. Residues 176 to 196 (FFFLHLAQILILEISAWLILH) form a helical membrane-spanning segment. Residues 197 to 201 (HFGSS) are Lumenal-facing. The helical transmembrane segment at 202 to 222 (WLVTILISFLLTVSQAQCSFL) threads the bilayer. Residues 223 to 307 (QHDLGHLSMF…IKYIDYEKQH (85 aa)) lie on the Cytoplasmic side of the membrane. Positions 224-228 (HDLGH) match the Histidine box-1 motif. Positions 261-265 (HFQHH) match the Histidine box-2 motif. A helical membrane pass occupies residues 308–328 (LYFYMVALPFLMPVYFNLQSM). Residues 329-349 (QVMYLRKYWMDIAWVSSFYIR) lie on the Lumenal side of the membrane. The helical transmembrane segment at 350-370 (YFITFGPFYGIFGTVLLIYLV) threads the bilayer. Residues 371-487 (KFIESPWIAY…ASLWMNAYYE (117 aa)) lie on the Cytoplasmic side of the membrane. Positions 426 to 430 (QIEHH) match the Histidine box-3 motif.

Belongs to the fatty acid desaturase type 1 family.

The protein resides in the endoplasmic reticulum membrane. It participates in lipid metabolism; polyunsaturated fatty acid biosynthesis. This Mus musculus (Mouse) protein is Fatty acid desaturase 2-like protein FADS2B.